Here is an 81-residue protein sequence, read N- to C-terminus: UPF0180 protein YkuS (81 aa).

Belongs to the UPF0180 family.

In Bacillus subtilis (strain 168), this protein is UPF0180 protein YkuS (ykuS).